The chain runs to 406 residues: Tryptophan synthase beta chain (406 aa).

Lys99 carries the N6-(pyridoxal phosphate)lysine modification.

The protein belongs to the TrpB family. In terms of assembly, tetramer of two alpha and two beta chains. It depends on pyridoxal 5'-phosphate as a cofactor.

The enzyme catalyses (1S,2R)-1-C-(indol-3-yl)glycerol 3-phosphate + L-serine = D-glyceraldehyde 3-phosphate + L-tryptophan + H2O. It participates in amino-acid biosynthesis; L-tryptophan biosynthesis; L-tryptophan from chorismate: step 5/5. Functionally, the beta subunit is responsible for the synthesis of L-tryptophan from indole and L-serine. The chain is Tryptophan synthase beta chain from Methylobacterium sp. (strain 4-46).